Reading from the N-terminus, the 1074-residue chain is BRD4-interacting chromatin-remodeling complex-associated protein-like (1074 aa).

4 disordered regions span residues 542–603 (AVSS…NTPG), 620–689 (TSPI…GQKR), 834–874 (TPLD…HDQF), and 887–952 (GNIS…SKLP). Polar residues-rich tracts occupy residues 544–576 (SSASTAHPTLGPTVQSGAPGSNFTGDQLTQANR), 591–603 (ASKSPSTLSNTPG), 620–629 (TSPIPTSKTT), and 660–680 (GATQAQPESSVGSSPSQTAVQ). Position 621 is a phosphoserine (Ser621). 3 stretches are compositionally biased toward basic and acidic residues: residues 889-904 (ISKKSEGHSRTLKFDR), 913-925 (PPEDKGGRRDPAK), and 934-948 (EGHRKSLPRPDHGSE). At Ser976 the chain carries Phosphoserine.

In terms of assembly, component of the multiprotein chromatin-remodeling complexes SWI/SNF: SWI/SNF-A (BAF), SWI/SNF-B (PBAF) and related complexes. The canonical complex contains a catalytic subunit (either SMARCA4/BRG1/BAF190A or SMARCA2/BRM/BAF190B) and at least SMARCE1, ACTL6A/BAF53, SMARCC1/BAF155, SMARCC2/BAF170, and SMARCB1/SNF5/BAF47. Other subunits specific to each of the complexes may also be present permitting several possible combinations developmentally and tissue specific. Component of the SWI/SNF (GBAF) subcomplex, which includes at least BICRA or BICRAL (mutually exclusive), BRD9, SS18, the core BAF subunits, SMARCA2/BRM, SMARCA4/BRG1/BAF190A, ACTL6A/BAF53, SMARCC1/BAF155, and SMARCD1/BAF60A.

Functionally, component of SWI/SNF chromatin remodeling subcomplex GBAF that carries out key enzymatic activities, changing chromatin structure by altering DNA-histone contacts within a nucleosome in an ATP-dependent manner. The sequence is that of BRD4-interacting chromatin-remodeling complex-associated protein-like from Mus musculus (Mouse).